The following is a 147-amino-acid chain: Calcium-regulated heat stable protein 1 (147 aa).

Over residues 1–12 (MSSEPPPPPQPP) the composition is skewed to pro residues. The interval 1–49 (MSSEPPPPPQPPTHQTSIGLLDTPRARDRSPSPLRGNVVPSPLPTRRTR) is disordered. N-acetylserine is present on serine 2. Serine 30, serine 32, and serine 41 each carry phosphoserine. Position 45 is a phosphothreonine (threonine 45). Serine 52 and serine 58 each carry phosphoserine. Positions 62-129 (VYKGVCKCFC…KLQAVEVVIT (68 aa)) constitute a CSD domain. 2 positions are modified to phosphoserine: serine 146 and serine 147.

As to quaternary structure, homodimer. Interacts with STYX. In terms of processing, can be phosphorylated by DYRK2 (in vitro). Dephosphorylated by calcineurin in a Ca(2+) dependent manner, and probably by PP2A or PP4 serine phosphatases in cAMP- and PKC-mediated pathways. Widely expressed.

Its subcellular location is the cytoplasm. The protein resides in the P-body. It is found in the cytoplasmic granule. Its function is as follows. Binds mRNA and regulates the stability of target mRNA. This is Calcium-regulated heat stable protein 1 (Carhsp1) from Rattus norvegicus (Rat).